The sequence spans 1067 residues: Isoleucine--tRNA ligase (1067 aa).

Residues Pro-49–Thr-59 carry the 'HIGH' region motif. A 'KMSKS' region motif is present at residues Lys-625–Ser-629. Lys-628 serves as a coordination point for ATP.

Belongs to the class-I aminoacyl-tRNA synthetase family. IleS type 2 subfamily. As to quaternary structure, monomer. Requires Zn(2+) as cofactor.

The protein resides in the cytoplasm. The enzyme catalyses tRNA(Ile) + L-isoleucine + ATP = L-isoleucyl-tRNA(Ile) + AMP + diphosphate. Functionally, catalyzes the attachment of isoleucine to tRNA(Ile). As IleRS can inadvertently accommodate and process structurally similar amino acids such as valine, to avoid such errors it has two additional distinct tRNA(Ile)-dependent editing activities. One activity is designated as 'pretransfer' editing and involves the hydrolysis of activated Val-AMP. The other activity is designated 'posttransfer' editing and involves deacylation of mischarged Val-tRNA(Ile). This is Isoleucine--tRNA ligase from Pyrococcus abyssi (strain GE5 / Orsay).